Consider the following 147-residue polypeptide: Small ribosomal subunit protein uS12 (147 aa).

It belongs to the universal ribosomal protein uS12 family. As to quaternary structure, part of the 30S ribosomal subunit.

With S4 and S5 plays an important role in translational accuracy. Located at the interface of the 30S and 50S subunits. The sequence is that of Small ribosomal subunit protein uS12 from Saccharolobus solfataricus (strain ATCC 35092 / DSM 1617 / JCM 11322 / P2) (Sulfolobus solfataricus).